A 452-amino-acid polypeptide reads, in one-letter code: Phosphoglucosamine mutase (452 aa).

Ser-108 functions as the Phosphoserine intermediate in the catalytic mechanism. Residues Ser-108, Asp-247, Asp-249, and Asp-251 each coordinate Mg(2+). A Phosphoserine modification is found at Ser-108.

Belongs to the phosphohexose mutase family. Requires Mg(2+) as cofactor. In terms of processing, activated by phosphorylation.

The catalysed reaction is alpha-D-glucosamine 1-phosphate = D-glucosamine 6-phosphate. Its function is as follows. Catalyzes the conversion of glucosamine-6-phosphate to glucosamine-1-phosphate. This is Phosphoglucosamine mutase from Burkholderia mallei (strain NCTC 10247).